A 298-amino-acid polypeptide reads, in one-letter code: Succinate dehydrogenase [ubiquinone] iron-sulfur subunit, mitochondrial (298 aa).

Positions 59-147 (YRFNPEAPGA…STKIYPLPHM (89 aa)) constitute a 2Fe-2S ferredoxin-type domain. Residues C107, C112, C115, and C127 each contribute to the [2Fe-2S] cluster site. The region spanning 190-220 (ERDRLDGLYECILCACCSTSCPSYWWNADKY) is the 4Fe-4S ferredoxin-type domain. The [4Fe-4S] cluster site is built by C200, C203, and C206. Residue C210 coordinates [3Fe-4S] cluster. Residue W215 participates in a ubiquinone binding. C257 and C263 together coordinate [3Fe-4S] cluster. [4Fe-4S] cluster is bound at residue C267.

Belongs to the succinate dehydrogenase/fumarate reductase iron-sulfur protein family. As to quaternary structure, component of complex II composed of four subunits: a flavoprotein (FP), an iron-sulfur protein (IP), and a cytochrome b composed of a large and a small subunit. [2Fe-2S] cluster is required as a cofactor. The cofactor is [3Fe-4S] cluster. [4Fe-4S] cluster serves as cofactor.

It is found in the mitochondrion inner membrane. The catalysed reaction is a quinone + succinate = fumarate + a quinol. The protein operates within carbohydrate metabolism; tricarboxylic acid cycle; fumarate from succinate (eukaryal route): step 1/1. Functionally, iron-sulfur protein (IP) subunit of succinate dehydrogenase (SDH) that is involved in complex II of the mitochondrial electron transport chain and is responsible for transferring electrons from succinate to ubiquinone (coenzyme Q). This Caenorhabditis elegans protein is Succinate dehydrogenase [ubiquinone] iron-sulfur subunit, mitochondrial (sdhb-1).